Consider the following 210-residue polypeptide: NADH dehydrogenase [ubiquinone] iron-sulfur protein 8, mitochondrial (210 aa).

The N-terminal 34 residues, 1–34 (MRCLTTPVLLRALAQAARAGPPGGRSLHSSAVAA), are a transit peptide targeting the mitochondrion. 4Fe-4S ferredoxin-type domains lie at 102 to 131 (RRYP…IEAE) and 141 to 170 (TRYD…EGPN). [4Fe-4S] cluster-binding residues include C111, C114, C117, C121, C150, C153, C156, and C160.

This sequence belongs to the complex I 23 kDa subunit family. As to quaternary structure, core subunit of respiratory chain NADH dehydrogenase (Complex I) which is composed of 45 different subunits. This is a component of the iron-sulfur (IP) fragment of the enzyme. Interacts with RAB5IF. Requires [4Fe-4S] cluster as cofactor.

The protein localises to the mitochondrion inner membrane. The enzyme catalyses a ubiquinone + NADH + 5 H(+)(in) = a ubiquinol + NAD(+) + 4 H(+)(out). In terms of biological role, core subunit of the mitochondrial membrane respiratory chain NADH dehydrogenase (Complex I) which catalyzes electron transfer from NADH through the respiratory chain, using ubiquinone as an electron acceptor. Essential for the catalytic activity and assembly of complex I. The polypeptide is NADH dehydrogenase [ubiquinone] iron-sulfur protein 8, mitochondrial (NDUFS8) (Gorilla gorilla gorilla (Western lowland gorilla)).